The chain runs to 3753 residues: Intermembrane lipid transfer protein VPS13C (3753 aa).

The region spanning leucine 3 to serine 116 is the Chorein N-terminal domain. A Phosphoserine modification is found at serine 132. Basic residues predominate over residues glycine 150–phenylalanine 164. A disordered region spans residues glycine 150 to glutamate 176. Over residues lysine 165–glutamate 176 the composition is skewed to basic and acidic residues. Position 614 is a phosphothreonine (threonine 614). Serine 619 carries the phosphoserine modification. Threonine 624 is subject to Phosphothreonine. Residues serine 737, serine 842, serine 872, and serine 874 each carry the phosphoserine modification. An FFAT motif is present at residues glutamate 877–aspartate 883. Phosphoserine occurs at positions 1979 and 2473. Positions aspartate 2415–alanine 3309 are required for late endosome/lysosome localization. The region spanning leucine 2766–glycine 3016 is the SHR-BD domain. Positions glutamate 3310–serine 3753 are required for lipid droplet localization. 2 positions are modified to omega-N-methylarginine: arginine 3519 and arginine 3526. Lysine 3538 carries the N6-acetyllysine modification. Phosphoserine is present on serine 3641.

It belongs to the VPS13 family. In terms of tissue distribution, widely expressed.

The protein localises to the mitochondrion outer membrane. It is found in the lipid droplet. It localises to the endoplasmic reticulum membrane. Its subcellular location is the lysosome membrane. The protein resides in the late endosome membrane. Its function is as follows. Mediates the transfer of lipids between membranes at organelle contact sites. Necessary for proper mitochondrial function and maintenance of mitochondrial transmembrane potential. Involved in the regulation of PINK1/PRKN-mediated mitophagy in response to mitochondrial depolarization. This chain is Intermembrane lipid transfer protein VPS13C, found in Homo sapiens (Human).